The primary structure comprises 77 residues: Translation initiation factor IF-1, chloroplastic (77 aa).

An S1-like domain is found at 1 to 71; it reads MKEQKWIHEG…TKGRIIYRIR (71 aa).

Belongs to the IF-1 family. In terms of assembly, component of the 30S ribosomal translation pre-initiation complex which assembles on the 30S ribosome in the order IF-2 and IF-3, IF-1 and N-formylmethionyl-tRNA(fMet); mRNA recruitment can occur at any time during PIC assembly.

Its subcellular location is the plastid. It is found in the chloroplast. One of the essential components for the initiation of protein synthesis. Stabilizes the binding of IF-2 and IF-3 on the 30S subunit to which N-formylmethionyl-tRNA(fMet) subsequently binds. Helps modulate mRNA selection, yielding the 30S pre-initiation complex (PIC). Upon addition of the 50S ribosomal subunit IF-1, IF-2 and IF-3 are released leaving the mature 70S translation initiation complex. This is Translation initiation factor IF-1, chloroplastic from Vitis vinifera (Grape).